The primary structure comprises 238 residues: UPF0758 protein Dtpsy_2777 (238 aa).

The MPN domain occupies 116-238; sequence VFDSPQAVQH…ALSMAEQGLV (123 aa). Zn(2+) is bound by residues His187, His189, and Asp200. Positions 187 to 200 match the JAMM motif motif; that stretch reads HNHPSGSVQPSRAD.

The protein belongs to the UPF0758 family.

In Acidovorax ebreus (strain TPSY) (Diaphorobacter sp. (strain TPSY)), this protein is UPF0758 protein Dtpsy_2777.